Consider the following 551-residue polypeptide: Chloride channel CLIC-like protein 1 (551 aa).

An N-terminal signal peptide occupies residues 1–18; sequence MLCSLLLCECLLLVAGYA. Topologically, residues 19–184 are lumenal; sequence HDDDWIDPTD…EDSFGVDPYN (166 aa). Residues 185–205 traverse the membrane as a helical segment; it reads VLMVLLCLLCIVVLVATELWT. The Cytoplasmic segment spans residues 206-216; the sequence is YVRWYTQLRRV. A helical transmembrane segment spans residues 217 to 237; it reads LIISFLFSLGWNWMYLYKLAF. Residues 238–329 are Lumenal-facing; sequence AQHQAEVAKM…GEFIKALMKE (92 aa). The chain crosses the membrane as a helical span at residues 330–350; it reads IPALLHLPVLIIMALAILSFC. Topologically, residues 351-551 are cytoplasmic; that stretch reads YGAGKSVHVL…GQDPVSSPCG (201 aa). The segment at 363–415 is disordered; sequence IGGPESEPPQALRPRDRRRQEEIDYRPDGGAGDADFHYRGQMGPTEQGPYAKT. A compositionally biased stretch (basic and acidic residues) spans 380–389; it reads RRQEEIDYRP. Residues serine 438 and serine 464 each carry the phosphoserine modification. The segment at 447–551 is disordered; the sequence is VPDAEAREHP…GQDPVSSPCG (105 aa). At threonine 482 the chain carries Phosphothreonine. Positions 488-508 are enriched in polar residues; sequence TESSQSAKPVSGQDTSGNTEG. Residues serine 509, serine 524, and serine 532 each carry the phosphoserine modification.

Belongs to the chloride channel MCLC family. In terms of assembly, homomultimers. Interacts with mitochondrial protein PIGBOS1 (via C-terminus); the interaction occurs at the mitochondria-associated endoplasmic reticulum (ER) membrane, a zone of contact between the ER and mitochondrial membranes, but does not appear to play a role in ER-mitochondria tethering and is not affected by ER stress. Interacts with CALR. As to expression, expressed in the retina of the eye, with extensive expression in the lamina cribrosa, optic nerve, ganglion cell layer, inner nuclear layer, outer nuclear layer and retinal pigment epithelium.

The protein localises to the endoplasmic reticulum membrane. The catalysed reaction is chloride(in) = chloride(out). It catalyses the reaction bromide(in) = bromide(out). It carries out the reaction nitrate(in) = nitrate(out). The enzyme catalyses fluoride(in) = fluoride(out). Inhibited by ER lumenal Ca(2+). Anion-selective channel with Ca(2+)-dependent and voltage-independent gating. Permeable to small monovalent anions with selectivity for bromide &gt; chloride &gt; nitrate &gt; fluoride. Operates in the endoplasmic reticulum (ER) membrane where it mediates chloride efflux to compensate for the loss of positive charges from the ER lumen upon Ca(2+) release. Contributes to the maintenance of ER Ca(2+) pools and activation of unfolded protein response to prevent accumulation of misfolded proteins in the ER lumen. Particularly involved in ER homeostasis mechanisms underlying motor neurons and retinal photoreceptors survival. The chain is Chloride channel CLIC-like protein 1 from Homo sapiens (Human).